Reading from the N-terminus, the 212-residue chain is Protein DEPP1 (212 aa).

3 disordered regions span residues 20–39 (EEMLLGGPGQEPPPSPSLDD), 49–79 (QPTSVLDKATAQGQPRPPHRPAQACRKGRPA), and 113–176 (QEKQ…SDLR). Positions 113-124 (QEKQPSQRDLPR) are enriched in basic and acidic residues.

Expressed in various tissues, including pancreas, placenta, ovary, testis and kidney.

It is found in the cytoplasm. The protein resides in the peroxisome. Its subcellular location is the mitochondrion. Its function is as follows. Acts as a critical modulator of FOXO3-induced autophagy via increased cellular ROS. The sequence is that of Protein DEPP1 from Homo sapiens (Human).